The following is a 363-amino-acid chain: MPKTKLASSVELSFEEPELFVHMYDFAVEITDEFCQIAFPGAFHPAFLLVKLYHILLSVISMGSIIYFFLNYSNLLAFHFNIKILFFFQFCSCFLQSATLAISQTHHLVLALIANGPCDVILAPALFALFNLPLIFSMLCMEFSQVLMVIERTLASCLFVCYEKTTKTIGFVLTSFAVIVPGLTCLYMYYDDKFNYPQMSAMATSPSSKLRINYIFITINVLNVLTLMHSIGLYRHNKQKINMVKGRDHFILSSRFQMNENVSSSKLLWRLSCAQLIIFLLYGCAMYSLRIFLPGERSAVWQAVTEFCYTPPLYCAIMPLICIVCAQNSLKQRNSKVQSLITLRSVGQEGWDNYQGMLQKQWE.

A run of 7 helical transmembrane segments spans residues 46–66 (AFLL…GSII), 75–95 (LLAF…SCFL), 120–140 (VILA…SMLC), 169–189 (IGFV…LYMY), 214–234 (YIFI…IGLY), 273–293 (CAQL…RIFL), and 304–324 (VTEF…ICIV).

Belongs to the nematode receptor-like protein srb family.

It is found in the membrane. In Caenorhabditis elegans, this protein is Serpentine receptor class beta-17 (srb-17).